We begin with the raw amino-acid sequence, 863 residues long: DNA gyrase subunit A (863 aa).

The 464-residue stretch at 37–500 (LPDARDGLKP…DYDDIDIEDL (464 aa)) folds into the Topo IIA-type catalytic domain. Tyr-125 acts as the O-(5'-phospho-DNA)-tyrosine intermediate in catalysis. The GyrA-box signature appears at 527–533 (QKRGGKG).

It belongs to the type II topoisomerase GyrA/ParC subunit family. As to quaternary structure, heterotetramer, composed of two GyrA and two GyrB chains. In the heterotetramer, GyrA contains the active site tyrosine that forms a transient covalent intermediate with DNA, while GyrB binds cofactors and catalyzes ATP hydrolysis.

The protein resides in the cytoplasm. It catalyses the reaction ATP-dependent breakage, passage and rejoining of double-stranded DNA.. Its function is as follows. A type II topoisomerase that negatively supercoils closed circular double-stranded (ds) DNA in an ATP-dependent manner to modulate DNA topology and maintain chromosomes in an underwound state. Negative supercoiling favors strand separation, and DNA replication, transcription, recombination and repair, all of which involve strand separation. Also able to catalyze the interconversion of other topological isomers of dsDNA rings, including catenanes and knotted rings. Type II topoisomerases break and join 2 DNA strands simultaneously in an ATP-dependent manner. In Campylobacter jejuni subsp. jejuni serotype O:2 (strain ATCC 700819 / NCTC 11168), this protein is DNA gyrase subunit A.